Consider the following 344-residue polypeptide: sn-glycerol-3-phosphate import ATP-binding protein UgpC 2 (344 aa).

Residues 4 to 234 (IELIDLKKNY…PETVFVAGFI (231 aa)) form the ABC transporter domain. 36–43 (GPSGCGKS) contributes to the ATP binding site.

Belongs to the ABC transporter superfamily. sn-glycerol-3-phosphate importer (TC 3.A.1.1.3) family. In terms of assembly, the complex is composed of two ATP-binding proteins (UgpC), two transmembrane proteins (UgpA and UgpE) and a solute-binding protein (UgpB).

Its subcellular location is the cell inner membrane. It catalyses the reaction sn-glycerol 3-phosphate(out) + ATP + H2O = sn-glycerol 3-phosphate(in) + ADP + phosphate + H(+). Functionally, part of the ABC transporter complex UgpBAEC involved in sn-glycerol-3-phosphate (G3P) import. Responsible for energy coupling to the transport system. The sequence is that of sn-glycerol-3-phosphate import ATP-binding protein UgpC 2 from Rhizobium johnstonii (strain DSM 114642 / LMG 32736 / 3841) (Rhizobium leguminosarum bv. viciae).